Consider the following 453-residue polypeptide: tRNA modification GTPase MnmE (453 aa).

The (6S)-5-formyl-5,6,7,8-tetrahydrofolate site is built by R22, E79, and K119. The TrmE-type G domain maps to 215 to 376; it reads GMKVVIAGRP…LKQHLKSLMG (162 aa). Residue N225 participates in K(+) binding. GTP is bound by residues 225 to 230, 244 to 250, 269 to 272, and 334 to 337; these read NAGKSS, TEIAGTT, DTAG, and NKAD. S229 is a Mg(2+) binding site. 3 residues coordinate K(+): T244, I246, and T249. A Mg(2+)-binding site is contributed by T250. K453 contacts (6S)-5-formyl-5,6,7,8-tetrahydrofolate.

Belongs to the TRAFAC class TrmE-Era-EngA-EngB-Septin-like GTPase superfamily. TrmE GTPase family. In terms of assembly, homodimer. Heterotetramer of two MnmE and two MnmG subunits. K(+) serves as cofactor.

It localises to the cytoplasm. Functionally, exhibits a very high intrinsic GTPase hydrolysis rate. Involved in the addition of a carboxymethylaminomethyl (cmnm) group at the wobble position (U34) of certain tRNAs, forming tRNA-cmnm(5)s(2)U34. The polypeptide is tRNA modification GTPase MnmE (Shewanella frigidimarina (strain NCIMB 400)).